We begin with the raw amino-acid sequence, 334 residues long: MKKPFPFSAIVGQEQMKQAMVLTAIDPGIGGVLVFGDRGTGKSTAVRALAALLPLIKAVEGCPVNSARPEDCPEWAHVSSTTMIERPTPVVDLPLGVTEDRVVGALDIERALTRGEKAFEPGLLARANRGYLYIDEVNLLEDHIVDLLLDVAQSGENVVEREGLSIRHPARFVLVGSGNPEEGELRPQLLDRFGLSVEVRSPRDVETRVEVITRRDAYDADHDAFMEKWGAEDMQLRGRILGARAALPQLKTPNTVLHDCAALCIALGSDGLRGELTLLRAARAQAAFEGAEAVGRSHLRSVATMALSHRLRRDPLDEAGSVSRVERCVAEVLP.

Gly-36 to Ser-43 provides a ligand contact to ATP.

This sequence belongs to the Mg-chelatase subunits D/I family.

The catalysed reaction is protoporphyrin IX + Mg(2+) + ATP + H2O = Mg-protoporphyrin IX + ADP + phosphate + 3 H(+). It functions in the pathway porphyrin-containing compound metabolism; bacteriochlorophyll biosynthesis. Functionally, involved in bacteriochlorophyll biosynthesis; introduces a magnesium ion into protoporphyrin IX to yield Mg-protoporphyrin IX. This Cereibacter sphaeroides (strain ATCC 17023 / DSM 158 / JCM 6121 / CCUG 31486 / LMG 2827 / NBRC 12203 / NCIMB 8253 / ATH 2.4.1.) (Rhodobacter sphaeroides) protein is Magnesium-chelatase 38 kDa subunit (bchI).